A 218-amino-acid polypeptide reads, in one-letter code: Adenylate kinase (218 aa).

Position 10–15 (glycine 10–threonine 15) interacts with ATP. The segment at serine 30–valine 59 is NMP. Residues threonine 31, arginine 36, glycine 57–valine 59, glycine 85–arginine 88, and glutamine 92 contribute to the AMP site. An LID region spans residues glycine 122–aspartate 159. Residues arginine 123 and serine 132–tyrosine 133 each bind ATP. AMP-binding residues include arginine 156 and arginine 167. Glycine 203 is a binding site for ATP.

It belongs to the adenylate kinase family. In terms of assembly, monomer.

It localises to the cytoplasm. It catalyses the reaction AMP + ATP = 2 ADP. The protein operates within purine metabolism; AMP biosynthesis via salvage pathway; AMP from ADP: step 1/1. Its function is as follows. Catalyzes the reversible transfer of the terminal phosphate group between ATP and AMP. Plays an important role in cellular energy homeostasis and in adenine nucleotide metabolism. The chain is Adenylate kinase from Bordetella parapertussis (strain 12822 / ATCC BAA-587 / NCTC 13253).